Consider the following 275-residue polypeptide: Phosphate import ATP-binding protein PstB 1 (275 aa).

The 240-residue stretch at 22–261 folds into the ABC transporter domain; sequence FNVEGVKVYY…SPTEQMFNSP (240 aa). 54–61 contacts ATP; the sequence is GPSGCGKS.

It belongs to the ABC transporter superfamily. Phosphate importer (TC 3.A.1.7) family. As to quaternary structure, the complex is composed of two ATP-binding proteins (PstB), two transmembrane proteins (PstC and PstA) and a solute-binding protein (PstS).

It is found in the cell inner membrane. The enzyme catalyses phosphate(out) + ATP + H2O = ADP + 2 phosphate(in) + H(+). In terms of biological role, part of the ABC transporter complex PstSACB involved in phosphate import. Responsible for energy coupling to the transport system. The protein is Phosphate import ATP-binding protein PstB 1 of Trichormus variabilis (strain ATCC 29413 / PCC 7937) (Anabaena variabilis).